The sequence spans 362 residues: Serine/threonine-protein kinase SBK2 (362 aa).

The segment covering 1–11 (MPGKQSEDKPM) has biased composition (basic and acidic residues). The segment at 1 to 26 (MPGKQSEDKPMEVSTVEDGGDEGLGG) is disordered. Residues 62-330 (YEEVRPLGQG…IKSYLGQPWK (269 aa)) form the Protein kinase domain. ATP is bound by residues 68 to 76 (LGQGRFGRV) and Lys-91. Asp-183 acts as the Proton acceptor in catalysis. Residues 329–362 (WKQREGEAEELATELREDGWRGGQEAAKGEQPAC) are disordered.

It belongs to the protein kinase superfamily. Ser/Thr protein kinase family. STKL subfamily.

The enzyme catalyses L-seryl-[protein] + ATP = O-phospho-L-seryl-[protein] + ADP + H(+). It catalyses the reaction L-threonyl-[protein] + ATP = O-phospho-L-threonyl-[protein] + ADP + H(+). The sequence is that of Serine/threonine-protein kinase SBK2 (Sbk2) from Mus musculus (Mouse).